Consider the following 32-residue polypeptide: Photosystem II reaction center protein T (32 aa).

The helical transmembrane segment at 3–23 threads the bilayer; that stretch reads ALVYTFLLVATLGIIFFAIFF.

It belongs to the PsbT family. In terms of assembly, PSII is composed of 1 copy each of membrane proteins PsbA, PsbB, PsbC, PsbD, PsbE, PsbF, PsbH, PsbI, PsbJ, PsbK, PsbL, PsbM, PsbT, PsbY, PsbZ, Psb30/Ycf12, at least 3 peripheral proteins of the oxygen-evolving complex and a large number of cofactors. It forms dimeric complexes.

The protein resides in the plastid. Its subcellular location is the chloroplast thylakoid membrane. In terms of biological role, found at the monomer-monomer interface of the photosystem II (PS II) dimer, plays a role in assembly and dimerization of PSII. PSII is a light-driven water plastoquinone oxidoreductase, using light energy to abstract electrons from H(2)O, generating a proton gradient subsequently used for ATP formation. The sequence is that of Photosystem II reaction center protein T from Psilotum nudum (Whisk fern).